A 382-amino-acid polypeptide reads, in one-letter code: Flap endonuclease 1-A (382 aa).

The interval 1 to 104 is N-domain; that stretch reads MGIHGLAKLI…GELAKRSERR (104 aa). D34 is a Mg(2+) binding site. DNA is bound by residues R47 and R70. Positions 86, 158, 160, 179, and 181 each coordinate Mg(2+). Positions 122 to 253 are I-domain; it reads NIEKFTKRLV…KRAIDLIRQH (132 aa). E158 provides a ligand contact to DNA. The DNA site is built by G231 and D233. D233 contributes to the Mg(2+) binding site. An interaction with PCNA region spans residues 336 to 344; sequence TQGRLDDFF. Positions 350–382 are disordered; that stretch reads VSSTKRKEAESKGSAKKKAKTGGTPAGKFKRGK.

Belongs to the XPG/RAD2 endonuclease family. FEN1 subfamily. In terms of assembly, interacts with PCNA. Three molecules of fen1 bind to one PCNA trimer with each molecule binding to one PCNA monomer. PCNA stimulates the nuclease activity without altering cleavage specificity. The cofactor is Mg(2+). In terms of processing, phosphorylated. Phosphorylation upon DNA damage induces relocalization to the nuclear plasma.

It is found in the nucleus. The protein resides in the nucleolus. The protein localises to the nucleoplasm. It localises to the mitochondrion. In terms of biological role, structure-specific nuclease with 5'-flap endonuclease and 5'-3' exonuclease activities involved in DNA replication and repair. During DNA replication, cleaves the 5'-overhanging flap structure that is generated by displacement synthesis when DNA polymerase encounters the 5'-end of a downstream Okazaki fragment. It enters the flap from the 5'-end and then tracks to cleave the flap base, leaving a nick for ligation. Also involved in the long patch base excision repair (LP-BER) pathway, by cleaving within the apurinic/apyrimidinic (AP) site-terminated flap. Acts as a genome stabilization factor that prevents flaps from equilibrating into structures that lead to duplications and deletions. Also possesses 5'-3' exonuclease activity on nicked or gapped double-stranded DNA, and exhibits RNase H activity. Also involved in replication and repair of rDNA and in repairing mitochondrial DNA. The sequence is that of Flap endonuclease 1-A (fen1-a) from Xenopus laevis (African clawed frog).